A 334-amino-acid chain; its full sequence is 3-keto-steroid reductase/17-beta-hydroxysteroid dehydrogenase 7 (334 aa).

Over 1–229 (MRKVVLITGA…VTCPGVVMTN (229 aa)) the chain is Extracellular. Position 8 to 15 (8 to 15 (TGASSGIG)) interacts with NAD(+). N-linked (GlcNAc...) asparagine glycosylation occurs at asparagine 37. Position 171 (serine 171) interacts with substrate. A glycan (N-linked (GlcNAc...) asparagine) is linked at asparagine 178. The Proton acceptor role is filled by tyrosine 193. A glycan (N-linked (GlcNAc...) asparagine) is linked at asparagine 229. Residues 230–250 (LTYGILPPFVWTLLLPVIWLL) traverse the membrane as a helical segment. At 251–334 (RFFAHAFTVT…ITIQKSDHHS (84 aa)) the chain is on the cytoplasmic side.

Belongs to the short-chain dehydrogenases/reductases (SDR) family. ERG27 subfamily. Binds to the short form of prolactin receptor. In terms of processing, phosphorylated. As to expression, most abundant in ovaries of pregnant animals.

It localises to the endoplasmic reticulum membrane. It catalyses the reaction 17beta-estradiol + NADP(+) = estrone + NADPH + H(+). The catalysed reaction is a 3beta-hydroxysteroid + NADP(+) = a 3-oxosteroid + NADPH + H(+). The enzyme catalyses 4alpha-methyl-5alpha-cholest-7-en-3beta-ol + NADP(+) = 4alpha-methyl-5alpha-cholest-7-en-3-one + NADPH + H(+). It carries out the reaction 4alpha-methyl-5alpha-cholest-8-en-3-one + NADPH + H(+) = 4alpha-methyl-5alpha-cholest-8-en-3beta-ol + NADP(+). It catalyses the reaction 3-dehydro-4alpha-methylzymosterol + NADPH + H(+) = 4alpha-methylzymosterol + NADP(+). The catalysed reaction is zymosterone + NADPH + H(+) = zymosterol + NADP(+). The enzyme catalyses 5alpha-cholest-8-en-3-one + NADPH + H(+) = 5alpha-cholest-8-en-3beta-ol + NADP(+). It carries out the reaction 5alpha-androstane-3beta,17beta-diol + NADP(+) = 17beta-hydroxy-5alpha-androstan-3-one + NADPH + H(+). It catalyses the reaction 5alpha-androstane-3alpha,17beta-diol + NADP(+) = 17beta-hydroxy-5alpha-androstan-3-one + NADPH + H(+). It participates in steroid biosynthesis; estrogen biosynthesis. The protein operates within steroid biosynthesis; zymosterol biosynthesis; zymosterol from lanosterol: step 5/6. Functionally, bifunctional enzyme involved in steroid-hormone metabolism and cholesterol biosynthesis. Catalyzes the NADP(H)-dependent reduction of estrogens and androgens and regulates the biological potency of these steroids. Converts estrone (E1) to a more potent estrogen, 17beta-estradiol (E2). Converts dihydrotestosterone (DHT) to an inactive form. Also participates in the post-squalene cholesterol biosynthesis, as a 3-ketosteroid reductase. This is 3-keto-steroid reductase/17-beta-hydroxysteroid dehydrogenase 7 (Hsd17b7) from Rattus norvegicus (Rat).